The sequence spans 251 residues: Triosephosphate isomerase 1 (251 aa).

9-11 (NWK) lines the substrate pocket. The active-site Electrophile is the His95. Glu167 functions as the Proton acceptor in the catalytic mechanism. Substrate-binding positions include Gly173, Ser213, and 234–235 (GG).

The protein belongs to the triosephosphate isomerase family. As to quaternary structure, homodimer.

It is found in the cytoplasm. It carries out the reaction D-glyceraldehyde 3-phosphate = dihydroxyacetone phosphate. It participates in carbohydrate biosynthesis; gluconeogenesis. It functions in the pathway carbohydrate degradation; glycolysis; D-glyceraldehyde 3-phosphate from glycerone phosphate: step 1/1. Involved in the gluconeogenesis. Catalyzes stereospecifically the conversion of dihydroxyacetone phosphate (DHAP) to D-glyceraldehyde-3-phosphate (G3P). The sequence is that of Triosephosphate isomerase 1 from Listeria monocytogenes serovar 1/2a (strain ATCC BAA-679 / EGD-e).